A 118-amino-acid polypeptide reads, in one-letter code: DNA mimic protein DMP12 (118 aa).

Belongs to the DMP12-like protein family. As to quaternary structure, monomer. Interacts with the dimeric form of the DNA-binding protein HU.

Functionally, acts as a DNA mimic. Interacts with the DNA-binding protein HU and partially prevents the binding of HU protein to DNA by occupying the DNA binding sites on the protein. However, the relatively weak affinity of DMP12 for HU suggests that it may not completely block the HU protein-DNA binding, and that DMP12 is more likely to act as a regulator than a competitive inhibitor. It protects HU protein from limited digestion by trypsin in a limited trypsin digestion assay, suggesting that it may serve to protect the HU protein and improve the stability of unbound HU protein. This is DNA mimic protein DMP12 from Neisseria meningitidis serogroup B (strain ATCC BAA-335 / MC58).